The primary structure comprises 715 residues: Protein DENND6 homolog (715 aa).

Residues 13–58 (MIFKEEEIKKQQILLEKEEKEKQEQQQKKLNKDNIFKLEEEGKKLE) are a coiled coil. The region spanning 96–273 (NSFCIINFDL…VKQHQLGGGS (178 aa)) is the uDENN domain. Disordered stretches follow at residues 269-296 (LGGG…SNTT) and 392-416 (SGTR…NNNN). In terms of domain architecture, cDENN spans 299 to 476 (SPSIWSEMKL…KDLLTRHVLD (178 aa)). Low complexity predominate over residues 399–416 (SNNNNNQDDSEYNNNNNN). The dDENN domain occupies 478–600 (KEKILSEYKP…KQWLDDKRAQ (123 aa)).

Belongs to the DENND6 family.

The chain is Protein DENND6 homolog from Dictyostelium discoideum (Social amoeba).